Consider the following 468-residue polypeptide: Probable acid phosphatase DIA3 (468 aa).

The signal sequence occupies residues 1 to 20; that stretch reads MVKPVIFAICLGVLLSKALS. His76 acts as the Nucleophile in catalysis. N-linked (GlcNAc...) asparagine glycans are attached at residues Asn98, Asn163, Asn193, Asn202, Asn238, Asn251, and Asn316. The active-site Proton donor is Asp339. 4 N-linked (GlcNAc...) asparagine glycosylation sites follow: Asn357, Asn391, Asn457, and Asn462.

The protein belongs to the histidine acid phosphatase family.

It catalyses the reaction a phosphate monoester + H2O = an alcohol + phosphate. This is Probable acid phosphatase DIA3 (DIA3) from Saccharomyces cerevisiae (strain ATCC 204508 / S288c) (Baker's yeast).